Consider the following 485-residue polypeptide: Glutamyl-tRNA(Gln) amidotransferase subunit A (485 aa).

Residues Lys74 and Ser149 each act as charge relay system in the active site. The active-site Acyl-ester intermediate is the Ser173.

The protein belongs to the amidase family. GatA subfamily. As to quaternary structure, heterotrimer of A, B and C subunits.

The enzyme catalyses L-glutamyl-tRNA(Gln) + L-glutamine + ATP + H2O = L-glutaminyl-tRNA(Gln) + L-glutamate + ADP + phosphate + H(+). In terms of biological role, allows the formation of correctly charged Gln-tRNA(Gln) through the transamidation of misacylated Glu-tRNA(Gln) in organisms which lack glutaminyl-tRNA synthetase. The reaction takes place in the presence of glutamine and ATP through an activated gamma-phospho-Glu-tRNA(Gln). The sequence is that of Glutamyl-tRNA(Gln) amidotransferase subunit A from Synechococcus sp. (strain RCC307).